The following is a 267-amino-acid chain: tRNA pseudouridine synthase A (267 aa).

The active-site Nucleophile is Asp-52. Tyr-113 serves as a coordination point for substrate.

It belongs to the tRNA pseudouridine synthase TruA family. Homodimer.

The enzyme catalyses uridine(38/39/40) in tRNA = pseudouridine(38/39/40) in tRNA. In terms of biological role, formation of pseudouridine at positions 38, 39 and 40 in the anticodon stem and loop of transfer RNAs. This Chlamydia pneumoniae (Chlamydophila pneumoniae) protein is tRNA pseudouridine synthase A.